A 278-amino-acid chain; its full sequence is 4-deoxy-L-threo-5-hexosulose-uronate ketol-isomerase (278 aa).

Zn(2+) is bound by residues His196, His198, Glu203, and His245.

It belongs to the KduI family. The cofactor is Zn(2+).

The enzyme catalyses 5-dehydro-4-deoxy-D-glucuronate = 3-deoxy-D-glycero-2,5-hexodiulosonate. It functions in the pathway glycan metabolism; pectin degradation; 2-dehydro-3-deoxy-D-gluconate from pectin: step 4/5. Functionally, catalyzes the isomerization of 5-dehydro-4-deoxy-D-glucuronate to 3-deoxy-D-glycero-2,5-hexodiulosonate. The sequence is that of 4-deoxy-L-threo-5-hexosulose-uronate ketol-isomerase from Salmonella choleraesuis (strain SC-B67).